The sequence spans 272 residues: Tryptophan synthase alpha chain (272 aa).

Catalysis depends on proton acceptor residues Glu60 and Asp71.

The protein belongs to the TrpA family. In terms of assembly, tetramer of two alpha and two beta chains.

The catalysed reaction is (1S,2R)-1-C-(indol-3-yl)glycerol 3-phosphate + L-serine = D-glyceraldehyde 3-phosphate + L-tryptophan + H2O. It participates in amino-acid biosynthesis; L-tryptophan biosynthesis; L-tryptophan from chorismate: step 5/5. In terms of biological role, the alpha subunit is responsible for the aldol cleavage of indoleglycerol phosphate to indole and glyceraldehyde 3-phosphate. This is Tryptophan synthase alpha chain from Methanosarcina acetivorans (strain ATCC 35395 / DSM 2834 / JCM 12185 / C2A).